The chain runs to 732 residues: Bromodomain-containing factor 1 (732 aa).

Polar residues predominate over residues 1–22 (MSETFPETNTPVQTPSTESFVN). Disordered regions lie at residues 1 to 207 (MSET…NLPE), 324 to 380 (TNVA…ETKP), 491 to 517 (NKPVPEPTPQNSDVSDREYSSEEEDNV), 556 to 600 (REQQ…TPPQ), and 700 to 732 (VNGQQGSDNGFMKVVNQEESSEDEASSESSEEE). Positions 37-51 (SQDSDSNQQSSHQEP) are enriched in low complexity. Over residues 89 to 100 (ASQTGVIQTEVS) the composition is skewed to polar residues. Residues 137–147 (EAPEENPQEEV) show a composition bias toward acidic residues. The Bromo 1 domain occupies 206–315 (PENPIPQHQA…AQFEKLMVKV (110 aa)). Residues 327 to 338 (AEATSVATSPTT) are compositionally biased toward polar residues. Residues 370–380 (KSKELPYETKP) are compositionally biased toward basic and acidic residues. The Bromo 2 domain occupies 383-492 (KKVAAELRFC…AVFDKKWANK (110 aa)). The stretch at 529 to 569 (AIQVMENQIIRMRKELDELKKEHLKKLREQQAARKKKKQQK) forms a coiled coil. Positions 561 to 579 (ARKKKKQQKGKRRAPKAKH) are enriched in basic residues. A compositionally biased stretch (pro residues) spans 590 to 600 (PPEPPKLTPPQ). In terms of domain architecture, NET spans 593 to 672 (PPKLTPPQPV…GDKALKNSAG (80 aa)). Acidic residues predominate over residues 718–732 (ESSEDEASSESSEEE).

The protein belongs to the BET family.

The protein resides in the nucleus. In terms of biological role, transcription factor involved in the expression of a broad class of genes including snRNAs. Required for sporulation and DNA-damage repair. Prevents the spreading of SIR silencing at telomeres and protects histone H4, but not H3, from deacetylation. The polypeptide is Bromodomain-containing factor 1 (BDF1) (Candida albicans (strain SC5314 / ATCC MYA-2876) (Yeast)).